A 113-amino-acid polypeptide reads, in one-letter code: Prefoldin subunit beta (113 aa).

The protein belongs to the prefoldin subunit beta family. As to quaternary structure, heterohexamer of two alpha and four beta subunits.

The protein resides in the cytoplasm. Molecular chaperone capable of stabilizing a range of proteins. Seems to fulfill an ATP-independent, HSP70-like function in archaeal de novo protein folding. This Methanocaldococcus jannaschii (strain ATCC 43067 / DSM 2661 / JAL-1 / JCM 10045 / NBRC 100440) (Methanococcus jannaschii) protein is Prefoldin subunit beta (pfdB).